The sequence spans 576 residues: 9-cis-epoxycarotenoid dioxygenase NCED2, chloroplastic (576 aa).

A chloroplast-targeting transit peptide spans 1–34; it reads MEVPIAAMTFAHPANVMTLASRQPKSKRSHISPA. Histidine 270, histidine 319, histidine 385, and histidine 563 together coordinate Fe cation.

The protein belongs to the carotenoid oxygenase family. It depends on Fe(2+) as a cofactor.

Its subcellular location is the plastid. The protein resides in the chloroplast. The catalysed reaction is a 9-cis-epoxycarotenoid + O2 = a 12'-apo-carotenal + 2-cis,4-trans-xanthoxin. It carries out the reaction 9-cis-violaxanthin + O2 = (3S,5R,6S)-5,6-epoxy-3-hydroxy-5,6-dihydro-12'-apo-beta-caroten-12'-al + 2-cis,4-trans-xanthoxin. The enzyme catalyses 9'-cis-neoxanthin + O2 = (3S,5R,6R)-3,5-dihydroxy-6,7-didehydro-5,6-dihydro-12'-apo-beta-caroten-12'-al + 2-cis,4-trans-xanthoxin. Its function is as follows. Has a 11,12(11',12') 9-cis epoxycarotenoid cleavage activity. Catalyzes the first step of abscisic-acid biosynthesis from carotenoids. The sequence is that of 9-cis-epoxycarotenoid dioxygenase NCED2, chloroplastic from Oryza sativa subsp. japonica (Rice).